A 127-amino-acid chain; its full sequence is Small ribosomal subunit protein uS11 (127 aa).

This sequence belongs to the universal ribosomal protein uS11 family. In terms of assembly, part of the 30S ribosomal subunit. Interacts with proteins S7 and S18. Binds to IF-3.

Its function is as follows. Located on the platform of the 30S subunit, it bridges several disparate RNA helices of the 16S rRNA. Forms part of the Shine-Dalgarno cleft in the 70S ribosome. This Nitrosococcus oceani (strain ATCC 19707 / BCRC 17464 / JCM 30415 / NCIMB 11848 / C-107) protein is Small ribosomal subunit protein uS11.